Consider the following 89-residue polypeptide: Small ribosomal subunit protein uS17 (89 aa).

It belongs to the universal ribosomal protein uS17 family. In terms of assembly, part of the 30S ribosomal subunit.

Its function is as follows. One of the primary rRNA binding proteins, it binds specifically to the 5'-end of 16S ribosomal RNA. The sequence is that of Small ribosomal subunit protein uS17 from Xanthomonas campestris pv. campestris (strain 8004).